We begin with the raw amino-acid sequence, 398 residues long: Phosphoglycerate kinase (398 aa).

Residues 21 to 23 (DFN), Arg36, 59 to 62 (HLGR), Arg119, and Arg157 contribute to the substrate site. ATP is bound by residues Lys208, Gly296, Glu327, and 354 to 357 (GGDS).

The protein belongs to the phosphoglycerate kinase family. In terms of assembly, monomer.

It localises to the cytoplasm. The catalysed reaction is (2R)-3-phosphoglycerate + ATP = (2R)-3-phospho-glyceroyl phosphate + ADP. It participates in carbohydrate degradation; glycolysis; pyruvate from D-glyceraldehyde 3-phosphate: step 2/5. The chain is Phosphoglycerate kinase from Streptococcus pyogenes serotype M5 (strain Manfredo).